The sequence spans 265 residues: Type II pantothenate kinase (265 aa).

Residue D6–K13 coordinates ATP. E70 functions as the Proton acceptor in the catalytic mechanism. ATP contacts are provided by residues T99, G121–Q125, Y137, and S225.

The protein belongs to the type II pantothenate kinase family. Homodimer.

It localises to the cytoplasm. It carries out the reaction (R)-pantothenate + ATP = (R)-4'-phosphopantothenate + ADP + H(+). Its pathway is cofactor biosynthesis; coenzyme A biosynthesis; CoA from (R)-pantothenate: step 1/5. Catalyzes the phosphorylation of pantothenate (Pan), the first step in CoA biosynthesis. The polypeptide is Type II pantothenate kinase (Staphylococcus saprophyticus subsp. saprophyticus (strain ATCC 15305 / DSM 20229 / NCIMB 8711 / NCTC 7292 / S-41)).